Consider the following 358-residue polypeptide: Acyl-CoA desaturase 1 (358 aa).

Over 1 to 71 the chain is Cytoplasmic; that stretch reads MPAHMLQEIS…EGPPPKLEYV (71 aa). The span at 8–24 shows a compositional bias: low complexity; sequence EISSSYTTTTTITEPPS. The interval 8–33 is disordered; that stretch reads EISSSYTTTTTITEPPSGNLQNGREK. Residues 72–92 traverse the membrane as a helical segment; that stretch reads WRNIILMALLHVGALYGITLI. Asn-74 provides a ligand contact to substrate. Residues 93 to 96 are Lumenal-facing; sequence PSSK. The helical transmembrane segment at 97-117 threads the bilayer; that stretch reads VYTLLWGIFYYLISALGITAG. Over 118-216 the chain is Cytoplasmic; that stretch reads AHRLWSHRTY…EKLVMFQRRY (99 aa). Fe cation contacts are provided by His-119 and His-124. The Histidine box-1 signature appears at 119-124; sequence HRLWSH. Positions 147, 154, and 155 each coordinate substrate. Fe cation contacts are provided by His-156, His-159, and His-160. The Histidine box-2 motif lies at 156-160; sequence HRAHH. Residues Arg-187 and Lys-188 each contribute to the substrate site. The helical transmembrane segment at 217-236 threads the bilayer; the sequence is YKPGLLLMCFILPTLVPWYC. Residues 237–240 are Lumenal-facing; it reads WGET. Residues 241–262 traverse the membrane as a helical segment; that stretch reads FLHSLFVSTFLRYTLVLNATWL. Position 261 (Trp-261) interacts with substrate. Residues 263–358 are Cytoplasmic-facing; sequence VNSAAHLYGY…RTGDGSHKSS (96 aa). The Fe cation site is built by His-268, His-297, His-300, and His-301. The Histidine box-3 motif lies at 297 to 301; that stretch reads HNYHH.

This sequence belongs to the fatty acid desaturase type 1 family. The cofactor is Fe(2+). As to expression, detected in liver (at protein level). Detected in adipose tissue. Detected in liver when rats are kept on a fat-free diet, but not when their food contains unsaturated fatty acids.

Its subcellular location is the endoplasmic reticulum membrane. It localises to the membrane. It catalyses the reaction octadecanoyl-CoA + 2 Fe(II)-[cytochrome b5] + O2 + 2 H(+) = (9Z)-octadecenoyl-CoA + 2 Fe(III)-[cytochrome b5] + 2 H2O. In terms of biological role, stearoyl-CoA desaturase that utilizes O(2) and electrons from reduced cytochrome b5 to introduce the first double bond into saturated fatty acyl-CoA substrates. Catalyzes the insertion of a cis double bond at the Delta-9 position into fatty acyl-CoA substrates including palmitoyl-CoA and stearoyl-CoA. Gives rise to a mixture of 16:1 and 18:1 unsaturated fatty acids. Plays an important role in lipid biosynthesis. Plays an important role in regulating the expression of genes that are involved in lipogenesis and in regulating mitochondrial fatty acid oxidation. Plays an important role in body energy homeostasis. Contributes to the biosynthesis of membrane phospholipids, cholesterol esters and triglycerides. Required for normal development of sebaceous glands. Required for the biosynthesis of normal levels of Delta-9 unsaturated fatty acids and 1-alkyl-2,3-diacylglycerol in the Harderian gland. Required for normal production of meibum, an oily material that prevents drying of the cornea. This chain is Acyl-CoA desaturase 1 (Scd1), found in Rattus norvegicus (Rat).